The sequence spans 664 residues: Methionine--tRNA ligase (664 aa).

A 'HIGH' region motif is present at residues 13-23 (PYTNGPCHIGH). 4 residues coordinate Zn(2+): C144, C147, C156, and C160. Residues 327–331 (KFSKS) carry the 'KMSKS' region motif. Residue K330 participates in ATP binding. One can recognise a tRNA-binding domain in the interval 566–664 (EFGNLDIRIA…RPVKPGTKIR (99 aa)).

The protein belongs to the class-I aminoacyl-tRNA synthetase family. MetG type 1 subfamily. Homodimer. The cofactor is Zn(2+).

Its subcellular location is the cytoplasm. The enzyme catalyses tRNA(Met) + L-methionine + ATP = L-methionyl-tRNA(Met) + AMP + diphosphate. Functionally, is required not only for elongation of protein synthesis but also for the initiation of all mRNA translation through initiator tRNA(fMet) aminoacylation. This is Methionine--tRNA ligase from Methanoculleus marisnigri (strain ATCC 35101 / DSM 1498 / JR1).